A 238-amino-acid chain; its full sequence is Putative tyrosine-protein phosphatase OCA1 (238 aa).

Residues 1–43 (MTSKVGEYEDVPEDESRLTEENVSVPEEEVEDEDEEEDDDDDH) are disordered. N-acetylthreonine is present on Thr2. Ser24 is subject to Phosphoserine. Over residues 26-42 (PEEEVEDEDEEEDDDDD) the composition is skewed to acidic residues. The 159-residue stretch at 72-230 (NFCPVERYLY…LVKIDKNKAP (159 aa)) folds into the Tyrosine-protein phosphatase domain. Cys168 serves as the catalytic Phosphocysteine intermediate.

Belongs to the protein-tyrosine phosphatase family.

The protein localises to the cytoplasm. It carries out the reaction O-phospho-L-tyrosyl-[protein] + H2O = L-tyrosyl-[protein] + phosphate. In terms of biological role, putative tyrosine-protein phosphatase required for protection against superoxide stress. Involved in cell-cycle delay in response to linoleic acid hydroperoxide (LoaOOH). This Saccharomyces cerevisiae (strain YJM789) (Baker's yeast) protein is Putative tyrosine-protein phosphatase OCA1 (OCA1).